A 1127-amino-acid chain; its full sequence is Carbamoyl phosphate synthase large chain (1127 aa).

Positions 1 to 402 (MPKRTDIKSV…SLGKAMRSID (402 aa)) are carboxyphosphate synthetic domain. R129, R169, G175, G176, E208, I210, E215, G241, V242, H243, Q285, and E299 together coordinate ATP. Positions 133 to 328 (KKVVDEAGAE…IAKIATKLAL (196 aa)) constitute an ATP-grasp 1 domain. Positions 285, 299, and 301 each coordinate Mg(2+). Positions 285, 299, and 301 each coordinate Mn(2+). Residues 403 to 551 (KRHMGFNWDG…YYYSCYADET (149 aa)) form an oligomerization domain region. Residues 552-962 (ELRPREREAV…AFAKSQLAAY (411 aa)) are carbamoyl phosphate synthetic domain. Positions 681–881 (GEVLKKAEMN…LAKAAARIMA (201 aa)) constitute an ATP-grasp 2 domain. R717, K765, L767, E772, G797, V798, H799, S800, Q840, and E852 together coordinate ATP. Mg(2+) is bound by residues Q840, E852, and N854. Q840, E852, and N854 together coordinate Mn(2+). Residues 963–1127 (DGGLPTHGNV…QLFELERREF (165 aa)) form an allosteric domain region. Residues 964 to 1127 (GGLPTHGNVF…QLFELERREF (164 aa)) form the MGS-like domain.

The protein belongs to the CarB family. In terms of assembly, composed of two chains; the small (or glutamine) chain promotes the hydrolysis of glutamine to ammonia, which is used by the large (or ammonia) chain to synthesize carbamoyl phosphate. Tetramer of heterodimers (alpha,beta)4. Requires Mg(2+) as cofactor. The cofactor is Mn(2+).

It carries out the reaction hydrogencarbonate + L-glutamine + 2 ATP + H2O = carbamoyl phosphate + L-glutamate + 2 ADP + phosphate + 2 H(+). The enzyme catalyses hydrogencarbonate + NH4(+) + 2 ATP = carbamoyl phosphate + 2 ADP + phosphate + 2 H(+). Its pathway is amino-acid biosynthesis; L-arginine biosynthesis; carbamoyl phosphate from bicarbonate: step 1/1. It participates in pyrimidine metabolism; UMP biosynthesis via de novo pathway; (S)-dihydroorotate from bicarbonate: step 1/3. Large subunit of the glutamine-dependent carbamoyl phosphate synthetase (CPSase). CPSase catalyzes the formation of carbamoyl phosphate from the ammonia moiety of glutamine, carbonate, and phosphate donated by ATP, constituting the first step of 2 biosynthetic pathways, one leading to arginine and/or urea and the other to pyrimidine nucleotides. The large subunit (synthetase) binds the substrates ammonia (free or transferred from glutamine from the small subunit), hydrogencarbonate and ATP and carries out an ATP-coupled ligase reaction, activating hydrogencarbonate by forming carboxy phosphate which reacts with ammonia to form carbamoyl phosphate. The sequence is that of Carbamoyl phosphate synthase large chain from Bifidobacterium longum (strain DJO10A).